The primary structure comprises 152 residues: Large ribosomal subunit protein eL32 (152 aa).

It belongs to the eukaryotic ribosomal protein eL32 family.

The chain is Large ribosomal subunit protein eL32 (rpl32e) from Pyrobaculum aerophilum (strain ATCC 51768 / DSM 7523 / JCM 9630 / CIP 104966 / NBRC 100827 / IM2).